The primary structure comprises 364 residues: 1-acyl-sn-glycerol-3-phosphate acyltransferase epsilon (364 aa).

2 consecutive transmembrane segments (helical) span residues 15-35 (LLPSVVLLGTAPTYVLAWGVW) and 61-81 (MVLFFFENYTGVQILLYGDLP). The short motif at 93–98 (HQSTVD) is the HXXXXD motif element. Residues 344 to 364 (LYVNTWIYGTLLGCLWVTIKA) form a helical membrane-spanning segment.

It belongs to the 1-acyl-sn-glycerol-3-phosphate acyltransferase family. As to expression, widely expressed.

Its subcellular location is the endoplasmic reticulum membrane. The protein localises to the nucleus envelope. It localises to the mitochondrion. The catalysed reaction is a 1-acyl-sn-glycero-3-phosphate + an acyl-CoA = a 1,2-diacyl-sn-glycero-3-phosphate + CoA. It carries out the reaction 1-(9Z-octadecenoyl)-sn-glycero-3-phosphate + tetradecanoyl-CoA = 1-(9Z)-octadecenoyl-2-tetradecanoyl-sn-glycero-3-phosphate + CoA. It catalyses the reaction pentadecanoyl-CoA + 1-(9Z-octadecenoyl)-sn-glycero-3-phosphate = 1-(9Z)-octadecenoyl-2-pentadecanoyl-sn-glycero-3-phosphate + CoA. The enzyme catalyses 1-(9Z-octadecenoyl)-sn-glycero-3-phosphate + octadecanoyl-CoA = 1-(9Z-octadecenoyl)-2-octadecanoyl-sn-glycero-3-phosphate + CoA. The catalysed reaction is nonadecanoyl-CoA + 1-(9Z-octadecenoyl)-sn-glycero-3-phosphate = 1-(9Z)-octadecenoyl-2-nonadecanoyl-sn-glycero-3-phosphate + CoA. It carries out the reaction 1-(9Z-octadecenoyl)-sn-glycero-3-phosphoethanolamine + (9Z)-octadecenoyl-CoA = 1,2-di-(9Z-octadecenoyl)-sn-glycero-3-phosphoethanolamine + CoA. It catalyses the reaction 1-(9Z-octadecenoyl)-sn-glycero-3-phosphocholine + (9Z)-octadecenoyl-CoA = 1,2-di-(9Z-octadecenoyl)-sn-glycero-3-phosphocholine + CoA. The enzyme catalyses 1-(9Z-octadecenoyl)-sn-glycero-3-phospho-(1D-myo-inositol) + (5Z,8Z,11Z,14Z)-eicosatetraenoyl-CoA = 1-(9Z-octadecenoyl)-2-(5Z,8Z,11Z,14Z-eicosatetraenoyl)-sn-glycero-3-phospho-1D-myo-inositol + CoA. The catalysed reaction is 1-(9Z-octadecenoyl)-sn-glycero-3-phospho-L-serine + (9Z)-octadecenoyl-CoA = 1,2-di-(9Z)-octadecenoyl-sn-glycero-3-phospho-L-serine + CoA. It carries out the reaction 1-(9Z-octadecenoyl)-sn-glycero-3-phospho-L-serine + (5Z,8Z,11Z,14Z)-eicosatetraenoyl-CoA = 1-(9Z-octadecenoyl)-2-(5Z,8Z,11Z,14Z-eicosatetraenoyl)-sn-glycero-3-phospho-L-serine + CoA. It catalyses the reaction 1-hexadecanoyl-sn-glycero-3-phosphate + (9Z)-octadecenoyl-CoA = 1-hexadecanoyl-2-(9Z-octadecenoyl)-sn-glycero-3-phosphate + CoA. The enzyme catalyses 1-heptadecanoyl-sn-glycero-3-phosphate + (9Z)-octadecenoyl-CoA = 1-heptadecanoyl-2-(9Z)-octadecenoyl-sn-glycero-3-phosphate + CoA. The catalysed reaction is 1-(5Z,8Z,11Z,14Z-eicosatetraenoyl)-sn-glycero-3-phosphate + (9Z)-octadecenoyl-CoA = 1-(5Z,8Z,11Z,14Z)-eicosatetraenoyl-2-(9Z)-octadecenoyl-sn-glycero-3-phosphate + CoA. It carries out the reaction 1-octadecanoyl-sn-glycero-3-phosphate + (9Z)-octadecenoyl-CoA = 1-octadecanoyl-2-(9Z-octadecenoyl)-sn-glycero-3-phosphate + CoA. It catalyses the reaction 1-(9Z-octadecenoyl)-sn-glycero-3-phosphate + (5Z,8Z,11Z,14Z)-eicosatetraenoyl-CoA = 1-(9Z)-octadecenoyl-2-(5Z,8Z,11Z,14Z)-eicosatetraenoyl-sn-glycero-3-phosphate + CoA. The enzyme catalyses heptadecanoyl-CoA + 1-(9Z-octadecenoyl)-sn-glycero-3-phosphate = 1-(9Z)-octadecenoyl-2-heptadecanoyl-sn-glycero-3-phosphate + CoA. The catalysed reaction is 1-(9Z-octadecenoyl)-sn-glycero-3-phosphocholine + (5Z,8Z,11Z,14Z)-eicosatetraenoyl-CoA = 1-(9Z)-octadecenoyl-2-(5Z,8Z,11Z,14Z)-icosatetraenoyl-sn-glycero-3-phosphocholine + CoA. It carries out the reaction 1-(9Z-octadecenoyl)-sn-glycero-3-phosphate + (9Z)-octadecenoyl-CoA = 1,2-di-(9Z-octadecenoyl)-sn-glycero-3-phosphate + CoA. It catalyses the reaction 1-(9Z-octadecenoyl)-sn-glycero-3-phosphate + hexadecanoyl-CoA = 1-hexadecanoyl-2-(9Z-octadecenoyl)-sn-glycero-3-phosphate + CoA. The protein operates within phospholipid metabolism; CDP-diacylglycerol biosynthesis; CDP-diacylglycerol from sn-glycerol 3-phosphate: step 2/3. Functionally, converts 1-acyl-sn-glycerol-3-phosphate (lysophosphatidic acid or LPA) into 1,2-diacyl-sn-glycerol-3-phosphate (phosphatidic acid or PA) by incorporating an acyl moiety at the sn-2 position of the glycerol backbone. Acts on LPA containing saturated or unsaturated fatty acids C15:0-C20:4 at the sn-1 position using C18:1-CoA as the acyl donor. Also acts on lysophosphatidylethanolamine using oleoyl-CoA, but not arachidonoyl-CoA, and lysophosphatidylinositol using arachidonoyl-CoA, but not oleoyl-CoA. Activity toward lysophosphatidylglycerol not detectable. This Homo sapiens (Human) protein is 1-acyl-sn-glycerol-3-phosphate acyltransferase epsilon (AGPAT5).